The primary structure comprises 203 residues: MINEYVARKVALKDMQPCAICSKPSTTVLYNASGPDWLYTCEIHLQDNPQFVIPLYSTEYNEAVAQLKLVKGKMDSLTSAQTQLGSWDGWVTKIFSKKEKETNNSKDPDPTTTDSTDTSPQAKNDAEILSETKKQYSKILDKVTELQRKNRKYELAKIMFESRLLRKRTEQVNRERYLKEQENYSNTDPEELLRKHVFPSVPK.

The span at 99 to 109 (EKETNNSKDPD) shows a compositional bias: basic and acidic residues. Disordered regions lie at residues 99–125 (EKET…AKND) and 171–193 (QVNR…EELL). Residues 110–120 (PTTTDSTDTSP) show a composition bias toward low complexity. A coiled-coil region spans residues 121–157 (QAKNDAEILSETKKQYSKILDKVTELQRKNRKYELAK). Positions 171-182 (QVNRERYLKEQE) are enriched in basic and acidic residues.

Interacts with VPS4.

The protein localises to the cytoplasm. Its subcellular location is the endosome. VPS4-associated protein involved in trafficking to the vacuole. This Saccharomyces cerevisiae (strain ATCC 204508 / S288c) (Baker's yeast) protein is VPS4-associated protein 1 (VFA1).